We begin with the raw amino-acid sequence, 385 residues long: GTP cyclohydrolase 1 type 2 homolog (385 aa).

A divalent metal cation-binding residues include H64, H65, D103, H333, and E337.

Belongs to the GTP cyclohydrolase I type 2/NIF3 family. As to quaternary structure, homohexamer.

The chain is GTP cyclohydrolase 1 type 2 homolog from Mycobacterium leprae (strain TN).